A 232-amino-acid polypeptide reads, in one-letter code: Clarin-1 (232 aa).

The helical transmembrane segment at 8 to 28 (IIFCMAGVFSFACALGVVTAL) threads the bilayer. Asparagine 48 carries an N-linked (GlcNAc...) asparagine glycan. 3 helical membrane passes run 101-121 (VILF…FFMY), 135-155 (LGLY…MILF), and 186-206 (TTSF…GLLI).

This sequence belongs to the clarin family. In terms of tissue distribution, widely expressed. Found in the retina.

It localises to the cell membrane. In terms of biological role, may have a role in the excitatory ribbon synapse junctions between hair cells and cochlear ganglion cells and presumably also in analogous synapses within the retina. This chain is Clarin-1 (CLRN1), found in Homo sapiens (Human).